The following is a 153-amino-acid chain: Xanthine-guanine phosphoribosyltransferase (153 aa).

Residues 37 to 38, arginine 69, and 88 to 96 contribute to the 5-phospho-alpha-D-ribose 1-diphosphate site; these read RG and DDLVDTGGT. Arginine 69 contacts GMP. Aspartate 89 serves as a coordination point for Mg(2+). Aspartate 92 and isoleucine 135 together coordinate guanine. 2 residues coordinate xanthine: aspartate 92 and isoleucine 135. GMP contacts are provided by residues 92–96 and 134–135; these read DTGGT and WI.

The protein belongs to the purine/pyrimidine phosphoribosyltransferase family. XGPT subfamily. In terms of assembly, homotetramer. It depends on Mg(2+) as a cofactor.

Its subcellular location is the cell inner membrane. It carries out the reaction GMP + diphosphate = guanine + 5-phospho-alpha-D-ribose 1-diphosphate. The catalysed reaction is XMP + diphosphate = xanthine + 5-phospho-alpha-D-ribose 1-diphosphate. It catalyses the reaction IMP + diphosphate = hypoxanthine + 5-phospho-alpha-D-ribose 1-diphosphate. It functions in the pathway purine metabolism; GMP biosynthesis via salvage pathway; GMP from guanine: step 1/1. Its pathway is purine metabolism; XMP biosynthesis via salvage pathway; XMP from xanthine: step 1/1. In terms of biological role, purine salvage pathway enzyme that catalyzes the transfer of the ribosyl-5-phosphate group from 5-phospho-alpha-D-ribose 1-diphosphate (PRPP) to the N9 position of the 6-oxopurines guanine and xanthine to form the corresponding ribonucleotides GMP (guanosine 5'-monophosphate) and XMP (xanthosine 5'-monophosphate), with the release of PPi. To a lesser extent, also acts on hypoxanthine. The chain is Xanthine-guanine phosphoribosyltransferase from Proteus mirabilis (strain HI4320).